Here is a 406-residue protein sequence, read N- to C-terminus: Vacuole membrane protein 1 (406 aa).

Positions 1-21 are enriched in basic and acidic residues; the sequence is MAENGKNCDQRRVAMNKEHHN. Positions 1–35 are disordered; it reads MAENGKNCDQRRVAMNKEHHNGNFTDPSSVNEKKR. At Ala-2 the chain carries N-acetylalanine. The Cytoplasmic portion of the chain corresponds to 2–43; it reads AENGKNCDQRRVAMNKEHHNGNFTDPSSVNEKKRREREERQN. The helical transmembrane segment at 44–64 threads the bilayer; the sequence is IVLWRQPLITLQYFSLEILVI. The Extracellular portion of the chain corresponds to 65-77; that stretch reads LKEWTSKLWHRQS. The helical transmembrane segment at 78 to 98 threads the bilayer; it reads IVVSFLLLLAVLIATYYVEGV. Over 99 to 109 the chain is Cytoplasmic; that stretch reads HQQYVQRIEKQ. The chain crosses the membrane as a helical span at residues 110–130; that stretch reads FLLYAYWIGLGILSSVGLGTG. Over 131 to 250 the chain is Extracellular; it reads LHTFLLYLGP…ASRAKLAVQK (120 aa). Residues 173–316 are VTT domain; the sequence is GTEGTISLWS…FVIITFSKHI (144 aa). Residues 251–271 form a helical membrane-spanning segment; sequence LVQKVGFFGILACASIPNPLF. Residues 272–273 are Cytoplasmic-facing; the sequence is DL. Residues 274-294 traverse the membrane as a helical segment; sequence AGITCGHFLVPFWTFFGATLI. Residues 295–305 are Extracellular-facing; that stretch reads GKAIIKMHIQK. A helical membrane pass occupies residues 306-326; it reads IFVIITFSKHIVEQMVAFIGA. The Cytoplasmic segment spans residues 327–363; sequence VPGIGPSLQKPFQEYLEAQRQKLHHKSEMGTPQGENW. A helical membrane pass occupies residues 364–384; it reads LSWMFEKLVVVMVCYFILSII. At 385-406 the chain is on the extracellular side; it reads NSMAQSYAKRIQQRLNSEEKTK.

It belongs to the VMP1 family. As to quaternary structure, interacts with BECN1. Interacts with TJP1. Interacts with TP53INP2. Interacts with TMEM41B. Interacts with ATP2A2, PLN and SLN; competes with PLN and SLN to prevent them from forming an inhibitory complex with ATP2A2. Interacts with ATG2A.

It is found in the endoplasmic reticulum-Golgi intermediate compartment membrane. It localises to the cell membrane. The protein localises to the vacuole membrane. Its subcellular location is the endoplasmic reticulum membrane. It catalyses the reaction a 1,2-diacyl-sn-glycero-3-phospho-L-serine(in) = a 1,2-diacyl-sn-glycero-3-phospho-L-serine(out). The catalysed reaction is cholesterol(in) = cholesterol(out). It carries out the reaction a 1,2-diacyl-sn-glycero-3-phosphocholine(in) = a 1,2-diacyl-sn-glycero-3-phosphocholine(out). The enzyme catalyses a 1,2-diacyl-sn-glycero-3-phosphoethanolamine(in) = a 1,2-diacyl-sn-glycero-3-phosphoethanolamine(out). Its function is as follows. Phospholipid scramblase involved in lipid homeostasis and membrane dynamics processes. Has phospholipid scramblase activity toward cholesterol and phosphatidylserine, as well as phosphatidylethanolamine and phosphatidylcholine. Required for autophagosome formation: participates in early stages of autophagosome biogenesis at the endoplasmic reticulum (ER) membrane by reequilibrating the leaflets of the ER as lipids are extracted by ATG2 (ATG2A or ATG2B) to mediate autophagosome assembly. Regulates ATP2A2 activity to control ER-isolation membrane contacts for autophagosome formation. In addition to autophagy, involved in other processes in which phospholipid scramblase activity is required. Modulates ER contacts with lipid droplets, mitochondria and endosomes. Plays an essential role in formation of cell junctions. Upon stress such as bacterial and viral infection, promotes formation of cytoplasmic vacuoles followed by cell death. Involved in the cytoplasmic vacuolization of acinar cells during the early stage of acute pancreatitis. Functionally, (Microbial infection) Host factor required for infection by all flaviviruses tested such as Zika virus and Yellow fever virus. Probably required post-entry of the virus to facilitate the ER membrane remodeling necessary to form replication organelles. In Homo sapiens (Human), this protein is Vacuole membrane protein 1.